The chain runs to 117 residues: UPF0342 protein BLi01058/BL02870 (117 aa).

It belongs to the UPF0342 family.

This is UPF0342 protein BLi01058/BL02870 from Bacillus licheniformis (strain ATCC 14580 / DSM 13 / JCM 2505 / CCUG 7422 / NBRC 12200 / NCIMB 9375 / NCTC 10341 / NRRL NRS-1264 / Gibson 46).